The sequence spans 515 residues: Cytochrome P450 monooxygenase paxP (515 aa).

The chain crosses the membrane as a helical span at residues 20–36; sequence SLLWKLGVFAVLVYFLL. Cys456 serves as a coordination point for heme.

The protein belongs to the cytochrome P450 family. It depends on heme as a cofactor.

The protein localises to the membrane. Its pathway is secondary metabolite biosynthesis. Cytochrome P450 monooxygenase; part of the ATM2 gene cluster that mediates the biosynthesis of paxilline, a mycotoxin that acts as an inhibitor of mammalian maxi-K channels. PaxG, the geranylgeranyl diphosphate (GGPP) synthase is proposed to catalyze the first step in paxilline biosynthesis. Condensation of indole-3-glycerol phosphate with GGPP by paxC then forms 3-geranylgeranylindole (3-GGI), followed by epoxidation and cyclization of this intermediate (by paxM and paxB) to form paspaline. Paspaline is subsequently converted to 13-desoxypaxilline by paxP, the latter being then converted to paxilline by paxQ. Finally paxilline can be mono- and di-prenylated by paxD. PaxP can also utilized beta-paxitriol and alpha-PC-M6 as substrates converting them to paxilline. This chain is Cytochrome P450 monooxygenase paxP, found in Penicillium paxilli.